Consider the following 520-residue polypeptide: MSTTAYPDTILIIDFGSQVTQLIARRVREANVYCEIVPFQSADEAFKRLQPKGVILSGSPHSTTDIGSPRAPQAIFDAGIPVLGICYGEQTMCAQLGGNVESGHDREFGRAFLDVQEDSPLFAGIWAKGTRHQVWMSHGDRVTSLPDGFTIIGTSPNAPYAVIADEKRKYYGVQFHPEVVHTPDGAKLLQNFVHRIVGVKPGWTMGAYREQAVEAIRKQVGSGKVICALSGGVDSSVAALLAHEAVGDQLTCILVDHGLMRKDEAQQVVEMFREHYNLPLILVDASDRFIGALESESDPEKKRKTIGRLFIEVFEEEARKLGGADFLVQGTLYPDVIESVSFTGGPSVTIKSHHNVGGLPERMKMQLVEPLRELFKDEVRLLGKELGLPDSFIGRHPFPGPGLAIRCPGGVTREKLEILREADAIYLDEIRKAGLYDAIWQAFAVLLPVQTVGVMGDGRTYEFVCALRAVTSVDGMTADFYHYDMNFLGNAATRIINEVRGINRVVYDVTSKPPGTIEWE.

A Glutamine amidotransferase type-1 domain is found at 9–202; sequence TILIIDFGSQ…VHRIVGVKPG (194 aa). The Nucleophile role is filled by Cys-86. Residues His-176 and Glu-178 contribute to the active site. The GMPS ATP-PPase domain maps to 203-395; the sequence is WTMGAYREQA…LGLPDSFIGR (193 aa). 230–236 contributes to the ATP binding site; that stretch reads SGGVDSS.

As to quaternary structure, homodimer.

It catalyses the reaction XMP + L-glutamine + ATP + H2O = GMP + L-glutamate + AMP + diphosphate + 2 H(+). It participates in purine metabolism; GMP biosynthesis; GMP from XMP (L-Gln route): step 1/1. Catalyzes the synthesis of GMP from XMP. This Brucella ovis (strain ATCC 25840 / 63/290 / NCTC 10512) protein is GMP synthase [glutamine-hydrolyzing].